Here is a 122-residue protein sequence, read N- to C-terminus: UPF0382 membrane protein SH2409 (122 aa).

Transmembrane regions (helical) follow at residues 3 to 23 (LFIILGALCTMMSVGTGAFGA), 46 to 66 (MYHGLGLIIIGVISGTTSINV), 69 to 89 (AGWLLFLGVVFFSGSLYILAL), and 98 to 118 (ITPIGGLLFIAGWLMLIISTF).

It belongs to the UPF0382 family.

Its subcellular location is the cell membrane. The polypeptide is UPF0382 membrane protein SH2409 (Staphylococcus haemolyticus (strain JCSC1435)).